Consider the following 272-residue polypeptide: Large ribosomal subunit protein uL2 (272 aa).

Positions 247-272 (PWGQPCKGFKTRNNKRTNSSIIKRRK) are disordered. Residues 262–272 (RTNSSIIKRRK) are compositionally biased toward polar residues.

Belongs to the universal ribosomal protein uL2 family. In terms of assembly, part of the 50S ribosomal subunit. Forms a bridge to the 30S subunit in the 70S ribosome.

Functionally, one of the primary rRNA binding proteins. Required for association of the 30S and 50S subunits to form the 70S ribosome, for tRNA binding and peptide bond formation. It has been suggested to have peptidyltransferase activity; this is somewhat controversial. Makes several contacts with the 16S rRNA in the 70S ribosome. This Bdellovibrio bacteriovorus (strain ATCC 15356 / DSM 50701 / NCIMB 9529 / HD100) protein is Large ribosomal subunit protein uL2.